A 30-amino-acid polypeptide reads, in one-letter code: Putative UPF0377 protein YNR075C-A (30 aa).

The protein belongs to the UPF0377 family.

The polypeptide is Putative UPF0377 protein YNR075C-A (Saccharomyces cerevisiae (strain ATCC 204508 / S288c) (Baker's yeast)).